Reading from the N-terminus, the 311-residue chain is Ketoisovalerate oxidoreductase subunit VorB (311 aa).

Heterotetramer of one alpha, one beta, one delta and one gamma chain.

The enzyme catalyses 3-methyl-2-oxobutanoate + 2 oxidized [2Fe-2S]-[ferredoxin] + CoA = 2-methylpropanoyl-CoA + 2 reduced [2Fe-2S]-[ferredoxin] + CO2 + H(+). This is Ketoisovalerate oxidoreductase subunit VorB (vorB) from Pyrococcus abyssi (strain GE5 / Orsay).